A 226-amino-acid polypeptide reads, in one-letter code: UPF0758 protein M6_Spy0838 (226 aa).

The MPN domain maps to 103–225 (SVLTSVQVAE…YYSFREKSTL (123 aa)). 3 residues coordinate Zn(2+): histidine 174, histidine 176, and aspartate 187. Residues 174 to 187 (HNHPSGNIEPSSND) carry the JAMM motif motif.

The protein belongs to the UPF0758 family.

This is UPF0758 protein M6_Spy0838 from Streptococcus pyogenes serotype M6 (strain ATCC BAA-946 / MGAS10394).